A 140-amino-acid chain; its full sequence is Ribosome-binding factor A (140 aa).

Residues 116–140 form a disordered region; it reads RERQERGEIPPGSDDAQNCHDDEPS.

This sequence belongs to the RbfA family. As to quaternary structure, monomer. Binds 30S ribosomal subunits, but not 50S ribosomal subunits or 70S ribosomes.

The protein resides in the cytoplasm. Functionally, one of several proteins that assist in the late maturation steps of the functional core of the 30S ribosomal subunit. Associates with free 30S ribosomal subunits (but not with 30S subunits that are part of 70S ribosomes or polysomes). Required for efficient processing of 16S rRNA. May interact with the 5'-terminal helix region of 16S rRNA. This chain is Ribosome-binding factor A, found in Synechococcus sp. (strain WH7803).